The primary structure comprises 89 residues: MVTCVRCLIAGRVQGVWFRASTKEKAMELGVRGWVRNLPDGRVEALLQGEAEAVEALKKWLWRGPTLAQVVDVQSEMVEIPEIQMFEVR.

The Acylphosphatase-like domain maps to 4–89; it reads CVRCLIAGRV…IPEIQMFEVR (86 aa). Residues R19 and N37 contribute to the active site.

The protein belongs to the acylphosphatase family.

The enzyme catalyses an acyl phosphate + H2O = a carboxylate + phosphate + H(+). The sequence is that of Acylphosphatase (acyP) from Nitrosococcus oceani (strain ATCC 19707 / BCRC 17464 / JCM 30415 / NCIMB 11848 / C-107).